Reading from the N-terminus, the 258-residue chain is Pimeloyl-[acyl-carrier protein] methyl ester esterase (258 aa).

The AB hydrolase-1 domain occupies 16 to 242; that stretch reads LVLLHGWGLN…AAHAPFISHP (227 aa). Residues W22, 82 to 83, and 143 to 147 each bind substrate; these read SM and FLALQ. The active-site Nucleophile is the S82. Catalysis depends on residues D207 and H235. H235 is a substrate binding site.

The protein belongs to the AB hydrolase superfamily. Carboxylesterase BioH family. As to quaternary structure, monomer.

Its subcellular location is the cytoplasm. The catalysed reaction is 6-carboxyhexanoyl-[ACP] methyl ester + H2O = 6-carboxyhexanoyl-[ACP] + methanol + H(+). The protein operates within cofactor biosynthesis; biotin biosynthesis. The physiological role of BioH is to remove the methyl group introduced by BioC when the pimeloyl moiety is complete. It allows to synthesize pimeloyl-ACP via the fatty acid synthetic pathway through the hydrolysis of the ester bonds of pimeloyl-ACP esters. The protein is Pimeloyl-[acyl-carrier protein] methyl ester esterase of Yersinia pseudotuberculosis serotype IB (strain PB1/+).